We begin with the raw amino-acid sequence, 340 residues long: Sideroflexin-5 (340 aa).

The next 4 helical transmembrane spans lie at 103–123 (IFMPFRMSGYIPFGTPIVVGL), 163–183 (FIQGYLGAVISAVSIAVGLNV), 254–274 (LTRVVLPMPILVLPPIVMSML), and 287–307 (LLPVQSLVCLAAFGLALPLAI).

The protein belongs to the sideroflexin family. In terms of tissue distribution, primarily expressed in the brain.

It localises to the mitochondrion inner membrane. The enzyme catalyses citrate(in) = citrate(out). Functionally, mitochondrial amino-acid transporter. Transports citrate. Does not act as a serine transporter: not able to mediate transport of serine into mitochondria. In brown adipose tissue, plays a role in the regulation of UCP1-dependent thermogenesis probably by supporting mitochondrial glycerol-3-phosphate utilization. The chain is Sideroflexin-5 from Homo sapiens (Human).